Here is a 21-residue protein sequence, read N- to C-terminus: Preblooming protein 2 (21 aa).

Possible mediator for cell division in the blooming process. The chain is Preblooming protein 2 from Prorocentrum triestinum (Red tide alga).